Reading from the N-terminus, the 237-residue chain is Pyridoxal phosphate homeostasis protein (237 aa).

At K35 the chain carries N6-(pyridoxal phosphate)lysine.

The protein belongs to the pyridoxal phosphate-binding protein YggS/PROSC family.

In terms of biological role, pyridoxal 5'-phosphate (PLP)-binding protein, which is involved in PLP homeostasis. The sequence is that of Pyridoxal phosphate homeostasis protein from Haemophilus influenzae (strain ATCC 51907 / DSM 11121 / KW20 / Rd).